A 215-amino-acid polypeptide reads, in one-letter code: Large ribosomal subunit protein bL25 (215 aa).

Positions 160-215 are disordered; sequence GDLPLPEGSELVTEPEETVMSVVAPETEEEPDTEEDEEGEEDVEEESEEEEEESEE. The span at 185-215 shows a compositional bias: acidic residues; that stretch reads ETEEEPDTEEDEEGEEDVEEESEEEEEESEE.

Belongs to the bacterial ribosomal protein bL25 family. CTC subfamily. In terms of assembly, part of the 50S ribosomal subunit; part of the 5S rRNA/L5/L18/L25 subcomplex. Contacts the 5S rRNA. Binds to the 5S rRNA independently of L5 and L18.

In terms of biological role, this is one of the proteins that binds to the 5S RNA in the ribosome where it forms part of the central protuberance. This is Large ribosomal subunit protein bL25 from Natranaerobius thermophilus (strain ATCC BAA-1301 / DSM 18059 / JW/NM-WN-LF).